The following is a 1071-amino-acid chain: Exportin-1 (1071 aa).

An Importin N-terminal domain is found at 46-112 (AQEVLTHLKE…KKYVVGLIIK (67 aa)). HEAT repeat units follow at residues 217-240 (QNAP…PLGY), 241-277 (IFET…VSVS), 354-472 (MLLV…YVDT), 515-553 (RFLV…QYPR), 560-597 (KFLK…KCRR), and 602-639 (VQVG…AVGY). Positions 327-450 (CTFLKEHGQL…VREFMKDTDS (124 aa)) are necessary for interaction with Ran and nuclear export complex formation. A Phosphoserine modification is found at Ser391. The interval 411–481 (TVLSKVRLLM…TEIIMTKKLQ (71 aa)) is necessary for interaction with RANBP3. Lys446 is subject to N6-acetyllysine. At Thr448 the chain carries Phosphothreonine. Ser450 carries the post-translational modification Phosphoserine. Tyr454 is modified (phosphotyrosine). An N6-acetyllysine modification is found at Lys693. HEAT repeat units follow at residues 775–813 (NFVP…KLGG), 885–916 (TMRN…SFYQ), 917–954 (TYFC…NLVE), and 1002–1039 (FSLN…EERE). Phosphoserine is present on Ser1031.

Belongs to the exportin family. As to quaternary structure, found in a U snRNA export complex with PHAX/RNUXA, NCBP1/CBP80, NCBP2/CBP20, RAN, XPO1 and m7G-capped RNA. Component of a nuclear export receptor complex composed of KPNB1, RAN, SNUPN and XPO1. Found in a trimeric export complex with SNUPN, RAN and XPO1. Found in a nuclear export complex with RANBP3 and RAN. Found in a 60S ribosomal subunit export complex with NMD3, RAN, XPO1. Interacts with DDX3X, NMD3, NUP42, NUP88, NUP214, RANBP3 and TERT. Interacts with NEMF (via its N-terminus). Interacts with the monomeric form of BIRC5/survivin deacetylated at 'Lys-129'. Interacts with SERTAD2; the interaction translocates SERTAD2 out of the nucleus. Interacts with ATF2. Interacts with SLC35G1 and STIM1. Interacts with DCAF8. Interacts with DTNBP1 and the interaction translocates DTNBP1 out of the nucleus. Interacts with CPEB3. Interacts with HAX1. Interacts with BOK; translocates to the cytoplasm. Interacts with HSP90AB1. Interacts with LRPPRC; interacts with LRPPRC alone and also when LRPPRC is in complex with EIF4E and with EIF4E sensitivity element (4ESE)-containing mRNAs to form an EIF4E-dependent mRNA export complex.

Its subcellular location is the cytoplasm. It is found in the nucleus. It localises to the nucleoplasm. The protein localises to the cajal body. The protein resides in the nucleolus. Functionally, mediates the nuclear export of cellular proteins (cargos) bearing a leucine-rich nuclear export signal (NES) and of RNAs. In the nucleus, in association with RANBP3, binds cooperatively to the NES on its target protein and to the GTPase Ran in its active GTP-bound form. Docking of this complex to the nuclear pore complex (NPC) is mediated through binding to nucleoporins. Upon transit of a nuclear export complex into the cytoplasm, disassembling of the complex and hydrolysis of Ran-GTP to Ran-GDP (induced by RANBP1 and RANGAP1, respectively) cause release of the cargo from the export receptor. The directionality of nuclear export is thought to be conferred by an asymmetric distribution of the GTP- and GDP-bound forms of Ran between the cytoplasm and nucleus. Involved in U3 snoRNA transport from Cajal bodies to nucleoli. Binds to late precursor U3 snoRNA bearing a TMG cap. The polypeptide is Exportin-1 (Xpo1) (Mus musculus (Mouse)).